The primary structure comprises 515 residues: Maturase K (515 aa).

Belongs to the intron maturase 2 family. MatK subfamily.

The protein resides in the plastid. Its subcellular location is the chloroplast. Functionally, usually encoded in the trnK tRNA gene intron. Probably assists in splicing its own and other chloroplast group II introns. The chain is Maturase K from Pinus patula (Mexican weeping pine).